A 254-amino-acid polypeptide reads, in one-letter code: Uridine-cytidine kinase 1 (254 aa).

The disordered stretch occupies residues 1–29 (MASAGGDECEGAAPEADRPHQRPFLIGVS). 30–38 (GGTASGKST) serves as a coordination point for ATP. Positions 87, 115, 120, 146, 155, and 163 each coordinate substrate. D192 serves as a coordination point for ATP. The interval 224 to 254 (SYKRTFSEPGDHPGMLTSGKRSHLESSSRPH) is disordered. T228 is modified (phosphothreonine). S230 carries the post-translational modification Phosphoserine. Basic and acidic residues predominate over residues 245 to 254 (SHLESSSRPH).

This sequence belongs to the uridine kinase family.

It carries out the reaction uridine + ATP = UMP + ADP + H(+). The enzyme catalyses cytidine + ATP = CMP + ADP + H(+). The protein operates within pyrimidine metabolism; CTP biosynthesis via salvage pathway; CTP from cytidine: step 1/3. It participates in pyrimidine metabolism; UMP biosynthesis via salvage pathway; UMP from uridine: step 1/1. Functionally, phosphorylates uridine and cytidine to uridine monophosphate and cytidine monophosphate. Does not phosphorylate deoxyribonucleosides or purine ribonucleosides. Can use ATP or GTP as a phosphate donor. In Macaca fascicularis (Crab-eating macaque), this protein is Uridine-cytidine kinase 1 (UCK1).